The primary structure comprises 86 residues: Hepcidin-1 (86 aa).

The first 22 residues, 1-22, serve as a signal peptide directing secretion; the sequence is MKAFSVAVVLVIACMFILESTA. Positions 23-59 are excised as a propeptide; sequence VPFSEVRTEEVGSFDSPVGEHQQPGGESMHLPEPFRF. 4 cysteine pairs are disulfide-bonded: C68/C84, C71/C74, C72/C80, and C75/C83.

Belongs to the hepcidin family.

It localises to the secreted. Its function is as follows. Seems to act as a signaling molecule involved in the maintenance of iron homeostasis. Seems to be required in conjunction with HFE to regulate both intestinal iron absorption and iron storage in macrophages. May also have antimicrobial activity. This Salmo salar (Atlantic salmon) protein is Hepcidin-1 (hamp1).